Reading from the N-terminus, the 859-residue chain is Protein EFR3 homolog (859 aa).

Residues R696 to S714 show a composition bias toward polar residues. The disordered stretch occupies residues R696–G728.

The protein belongs to the EFR3 family.

This is Protein EFR3 homolog from Caenorhabditis elegans.